A 304-amino-acid polypeptide reads, in one-letter code: Ribonuclease Z (304 aa).

Residues His-63, His-65, Asp-67, His-68, His-141, Asp-208, and His-266 each coordinate Zn(2+). Asp-67 functions as the Proton acceptor in the catalytic mechanism.

Belongs to the RNase Z family. Homodimer. The cofactor is Zn(2+).

It carries out the reaction Endonucleolytic cleavage of RNA, removing extra 3' nucleotides from tRNA precursor, generating 3' termini of tRNAs. A 3'-hydroxy group is left at the tRNA terminus and a 5'-phosphoryl group is left at the trailer molecule.. Zinc phosphodiesterase, which displays some tRNA 3'-processing endonuclease activity. Probably involved in tRNA maturation, by removing a 3'-trailer from precursor tRNA. This chain is Ribonuclease Z, found in Chlamydia trachomatis serovar D (strain ATCC VR-885 / DSM 19411 / UW-3/Cx).